The sequence spans 207 residues: Peptidyl-tRNA hydrolase (207 aa).

Tyrosine 14 contacts tRNA. Histidine 19 acts as the Proton acceptor in catalysis. 3 residues coordinate tRNA: tyrosine 64, asparagine 66, and asparagine 112.

Belongs to the PTH family. As to quaternary structure, monomer.

The protein resides in the cytoplasm. The catalysed reaction is an N-acyl-L-alpha-aminoacyl-tRNA + H2O = an N-acyl-L-amino acid + a tRNA + H(+). Functionally, hydrolyzes ribosome-free peptidyl-tRNAs (with 1 or more amino acids incorporated), which drop off the ribosome during protein synthesis, or as a result of ribosome stalling. In terms of biological role, catalyzes the release of premature peptidyl moieties from peptidyl-tRNA molecules trapped in stalled 50S ribosomal subunits, and thus maintains levels of free tRNAs and 50S ribosomes. The chain is Peptidyl-tRNA hydrolase from Rhodopseudomonas palustris (strain BisB5).